Reading from the N-terminus, the 319-residue chain is Acetyl-coenzyme A carboxylase carboxyl transferase subunit alpha (319 aa).

Positions 32–293 (NVDIEVRALE…KAVLLNELEA (262 aa)) constitute a CoA carboxyltransferase C-terminal domain.

It belongs to the AccA family. Acetyl-CoA carboxylase is a heterohexamer composed of biotin carboxyl carrier protein (AccB), biotin carboxylase (AccC) and two subunits each of ACCase subunit alpha (AccA) and ACCase subunit beta (AccD).

It localises to the cytoplasm. The catalysed reaction is N(6)-carboxybiotinyl-L-lysyl-[protein] + acetyl-CoA = N(6)-biotinyl-L-lysyl-[protein] + malonyl-CoA. Its pathway is lipid metabolism; malonyl-CoA biosynthesis; malonyl-CoA from acetyl-CoA: step 1/1. Functionally, component of the acetyl coenzyme A carboxylase (ACC) complex. First, biotin carboxylase catalyzes the carboxylation of biotin on its carrier protein (BCCP) and then the CO(2) group is transferred by the carboxyltransferase to acetyl-CoA to form malonyl-CoA. The polypeptide is Acetyl-coenzyme A carboxylase carboxyl transferase subunit alpha (Xylella fastidiosa (strain Temecula1 / ATCC 700964)).